The primary structure comprises 555 residues: Putative polyketide hydroxylase (555 aa).

FAD contacts are provided by residues 16–45 (PVLV…LVER) and 303–313 (YRAGRVFLAGD). The tract at residues 366-395 (ATTARAAARSAEHSHPGFAPPPGTSGGPQG) is disordered.

It belongs to the PheA/TfdB FAD monooxygenase family. The cofactor is FAD.

In terms of biological role, involved in developmentally regulated synthesis of a compound biosynthetically related to polyketide antibiotics which is essential for spore color in Streptomyces halstedii. The polypeptide is Putative polyketide hydroxylase (schC) (Streptomyces halstedii).